A 252-amino-acid polypeptide reads, in one-letter code: Mediator of RNA polymerase II transcription subunit 4 (252 aa).

Residues 70 to 112 (KIHQEMQVLEKEVEKRDSDIQQLQKQLKEAEHILATAVYQAKE) are a coiled coil. Residues 218–252 (HSNEFLMESLGPNKENEEDVEVMSTDSSSSSSDSD) form a disordered region. Low complexity predominate over residues 241–252 (STDSSSSSSDSD).

It belongs to the Mediator complex subunit 4 family. As to quaternary structure, component of the Mediator complex.

It is found in the nucleus. Functionally, component of the Mediator complex, a coactivator involved in the regulated transcription of nearly all RNA polymerase II-dependent genes. Mediator functions as a bridge to convey information from gene-specific regulatory proteins to the basal RNA polymerase II transcription machinery. Mediator is recruited to promoters by direct interactions with regulatory proteins and serves as a scaffold for the assembly of a functional preinitiation complex with RNA polymerase II and the general transcription factors. In Xenopus tropicalis (Western clawed frog), this protein is Mediator of RNA polymerase II transcription subunit 4 (med4).